Consider the following 495-residue polypeptide: Major facilitator-type transporter hxnP (495 aa).

Positions 1–24 (MGATATDIEKVPSAGTPDEPKAGE) are disordered. The next 5 membrane-spanning stretches (helical) occupy residues 36–55 (SFVR…MYFF), 84–104 (LLIL…NLLI), 123–143 (VWGI…LLAI), 145–165 (IILG…FTLF), and 177–197 (VLQS…FGLF). A glycan (N-linked (GlcNAc...) asparagine) is linked at asparagine 200. 5 consecutive transmembrane segments (helical) span residues 209–229 (WLFI…FWWL), 282–302 (VITF…PIIV), 314–334 (LWTV…AKSS), 341–361 (SLHI…LASI), and 368–388 (GVSY…TCLV). An N-linked (GlcNAc...) asparagine glycan is attached at asparagine 395. The next 2 membrane-spanning stretches (helical) occupy residues 404 to 424 (ANTG…AATF) and 436 to 456 (LVAT…MGTW).

Belongs to the major facilitator superfamily.

It localises to the cell membrane. In terms of biological role, major facilitator-type transporter, part of the hnx cluster involved in the purine degradation. The nicotinate hydroxylase hnxS accepts nicotinate as a substrate and catalyzes the first step of nicotinate catabolism. The major facilitator-type transporters hxnP and hxnZ are probably involved in the uptake of nicotinate-derived metabolites, and the oxidoreductases hxnT and hxnY in the further metabolism of 6-OH nicotinic acid. In Emericella nidulans (strain FGSC A4 / ATCC 38163 / CBS 112.46 / NRRL 194 / M139) (Aspergillus nidulans), this protein is Major facilitator-type transporter hxnP.